Reading from the N-terminus, the 213-residue chain is MFMNRLFGKPKQETSTLQTLDKLNETLEMLEKKENVLLKKATGEVEKAKEFSRAKNKRAAIQCLKRKRLYEQQVEQLGNFQLRIHDQMIMLEGAKATTETVDALRTGASAMKAMQKATNIDDVDKTMDEINEQTENMKQIQEALSAPFGANDFDEDELEAELDELEGAELEEQLLQPVPIHVPQGNKPARAPAQKQPTAEEDELAALQAEMAL.

Coiled-coil stretches lie at residues 11–42 and 118–176; these read KQETSTLQTLDKLNETLEMLEKKENVLLKKAT and TNID…QLLQ. The interval 180–213 is disordered; the sequence is IHVPQGNKPARAPAQKQPTAEEDELAALQAEMAL.

This sequence belongs to the SNF7 family. Component of the endosomal sorting required for transport complex III (ESCRT-III), composed at least of VPS2, VPS20, VPS24 and VPS32. Interacts with SKD1. Interacts with BRO1/ALIX.

The protein resides in the endosome. In terms of biological role, component of the ESCRT-III complex, which is required for multivesicular bodies (MVBs) formation and sorting of endosomal cargo proteins into MVBs. The ESCRT-III complex is probably involved in the concentration of MVB cargo. The sequence is that of Vacuolar protein sorting-associated protein 32 homolog 1 (VPS32.1) from Arabidopsis thaliana (Mouse-ear cress).